A 496-amino-acid polypeptide reads, in one-letter code: NADP-dependent glyceraldehyde-3-phosphate dehydrogenase (496 aa).

Substrate-binding positions include R116 and N169–Y170. The NADP(+) site is built by K192, T195, and D230. G245–G249 is a binding site for NAD(+). E264 serves as the catalytic Proton acceptor. R297–T299 is a substrate binding site. C298 serves as the catalytic Nucleophile. E391 provides a ligand contact to NADP(+). R451 contributes to the substrate binding site.

Belongs to the aldehyde dehydrogenase family.

It localises to the cytoplasm. The catalysed reaction is D-glyceraldehyde 3-phosphate + NADP(+) + H2O = (2R)-3-phosphoglycerate + NADPH + 2 H(+). In terms of biological role, important as a means of generating NADPH for biosynthetic reactions. The protein is NADP-dependent glyceraldehyde-3-phosphate dehydrogenase (GAPN) of Pisum sativum (Garden pea).